Here is a 346-residue protein sequence, read N- to C-terminus: Oxidoreductase calI (346 aa).

The interval 11–33 (VSTPQGRGDGRPTADQVLRDQDP) is disordered. A compositionally biased stretch (basic and acidic residues) spans 18–32 (GDGRPTADQVLRDQD). Residues leucine 52, lysine 76, aspartate 100, and asparagine 128 each contribute to the NADP(+) site. The Proton donor role is filled by serine 181. NADP(+)-binding residues include tyrosine 208, lysine 212, and isoleucine 241. Tyrosine 208 serves as the catalytic Proton acceptor. Lysine 212 acts as the Lowers pKa of active site Tyr in catalysis.

This sequence belongs to the short-chain dehydrogenases/reductases (SDR) family.

It functions in the pathway secondary metabolite biosynthesis. In terms of biological role, oxidoreductase; part of the gene cluster that mediates the biosynthesis of calbistrin A and related compounds. Calbistrin A is a secondary metabolite with an interesting structure that was recently found to have bioactivity against leukemia cells. It consists of two polyketides linked by an ester bond: a bicyclic decalin containing polyketide and a linear 12 carbon dioic acid structure. The polyketide synthase calA is probably responsible for forming the decalin moiety. Because calA lacks a designated enoylreductase (ER) domain, the required activity is provided by the trans-enoyl reductase calK. Following release from the PKS, calF then probably catalyzes the oxidation and the subsequent Diels Alder cycloisomerization that lead to the formation of the decalin moiety. The decalin polyketide backbone includes two C-methyl groups, at C7 and C11 in backbone, of which the C7 position is probably methylated by the methyltransferase domain of calA. A candidate for adding the methyl group at C11, if not done by CalA, is the cluster methyltransferase calH. Several additional tailoring enzymes within the cluster could be involved in the modification of the decalin polyketide product. Those include the 3 cytochrome P450 monooxygenases CalE, CalG and CalL, of which one might be responsible for the introduction of the extra hydroxyl group attached to the backbone of the decalin moiety, at position C9 in the backbone, that allows for attachment of the linear moiety. One tailoring enzyme activity that is expected to be involved in biosynthesis of calbistrin is an acyltransferase for connecting the two polyketide synthase products, and which could be performed by the cluster acyltransferase calJ. The enzyme responsible for the biosynthesis of the linear moiety, probably a second PKS, has not been identified yet. This chain is Oxidoreductase calI, found in Penicillium decumbens.